The primary structure comprises 304 residues: Protein translocase subunit SecF (304 aa).

6 helical membrane passes run 20–40 (AKLF…LIFT), 143–163 (AMMA…IRFE), 164–184 (LIFA…TLGF), 195–215 (TVVA…IVVF), 244–266 (LSRT…IFGG), and 276–298 (LVIG…VYLI).

This sequence belongs to the SecD/SecF family. SecF subfamily. In terms of assembly, forms a complex with SecD. Part of the essential Sec protein translocation apparatus which comprises SecA, SecYEG and auxiliary proteins SecDF. Other proteins may also be involved.

It localises to the cell inner membrane. In terms of biological role, part of the Sec protein translocase complex. Interacts with the SecYEG preprotein conducting channel. SecDF uses the proton motive force (PMF) to complete protein translocation after the ATP-dependent function of SecA. In Calditerrivibrio nitroreducens (strain DSM 19672 / NBRC 101217 / Yu37-1), this protein is Protein translocase subunit SecF.